A 328-amino-acid polypeptide reads, in one-letter code: Nucleotide-binding protein Blon_1085/BLIJ_1109 (328 aa).

Residues 1–33 are disordered; that stretch reads MSQQTTIRDTGEAAATNAPANSATSTSTPDNQP. Positions 13–29 are enriched in low complexity; it reads AAATNAPANSATSTSTP. 46-53 contacts ATP; the sequence is GMSGAGRS. Position 101-104 (101-104) interacts with GTP; sequence DVRS.

It belongs to the RapZ-like family.

In terms of biological role, displays ATPase and GTPase activities. In Bifidobacterium longum subsp. infantis (strain ATCC 15697 / DSM 20088 / JCM 1222 / NCTC 11817 / S12), this protein is Nucleotide-binding protein Blon_1085/BLIJ_1109.